Here is a 419-residue protein sequence, read N- to C-terminus: Gamma-glutamyl phosphate reductase (419 aa).

The protein belongs to the gamma-glutamyl phosphate reductase family.

It localises to the cytoplasm. It carries out the reaction L-glutamate 5-semialdehyde + phosphate + NADP(+) = L-glutamyl 5-phosphate + NADPH + H(+). Its pathway is amino-acid biosynthesis; L-proline biosynthesis; L-glutamate 5-semialdehyde from L-glutamate: step 2/2. In terms of biological role, catalyzes the NADPH-dependent reduction of L-glutamate 5-phosphate into L-glutamate 5-semialdehyde and phosphate. The product spontaneously undergoes cyclization to form 1-pyrroline-5-carboxylate. This chain is Gamma-glutamyl phosphate reductase, found in Ruthia magnifica subsp. Calyptogena magnifica.